Reading from the N-terminus, the 119-residue chain is Venom allergen 2 (119 aa).

The protein belongs to the ant venom allergen 2/4 family. In terms of assembly, homodimer; disulfide-linked. As to expression, expressed by the venom gland.

Its subcellular location is the secreted. The sequence is that of Venom allergen 2 from Solenopsis richteri (Black imported fire ant).